Reading from the N-terminus, the 128-residue chain is Probable 4-amino-4-deoxy-L-arabinose-phosphoundecaprenol flippase subunit ArnF (128 aa).

The Cytoplasmic segment spans residues 1 to 10; the sequence is MKGYLWGGAS. A helical transmembrane segment spans residues 11–31; the sequence is VVLVTVAQLVLKWGMMNIPLL. The Periplasmic portion of the chain corresponds to 32 to 47; it reads SLADINVQFLTMYFVQ. Residues 48 to 68 traverse the membrane as a helical segment; sequence LASVMCGLMGYALSMLCWFFA. Over 69–77 the chain is Cytoplasmic; that stretch reads LRYLPLNRA. The chain crosses the membrane as a helical span at residues 78-98; that stretch reads YPLLSLSYALVYLGAVLLPWF. At 99-101 the chain is on the periplasmic side; sequence NEP. Residues 102–122 traverse the membrane as a helical segment; it reads ATLLKTLGAGFILLGIWLINI. Residues 123–128 lie on the Cytoplasmic side of the membrane; it reads KPIKAS.

This sequence belongs to the ArnF family. In terms of assembly, heterodimer of ArnE and ArnF.

Its subcellular location is the cell inner membrane. It functions in the pathway bacterial outer membrane biogenesis; lipopolysaccharide biosynthesis. Functionally, translocates 4-amino-4-deoxy-L-arabinose-phosphoundecaprenol (alpha-L-Ara4N-phosphoundecaprenol) from the cytoplasmic to the periplasmic side of the inner membrane. This is Probable 4-amino-4-deoxy-L-arabinose-phosphoundecaprenol flippase subunit ArnF from Yersinia pseudotuberculosis serotype O:1b (strain IP 31758).